We begin with the raw amino-acid sequence, 491 residues long: Glutamyl-tRNA(Gln) amidotransferase subunit A (491 aa).

Residues lysine 78 and serine 158 each act as charge relay system in the active site. The active-site Acyl-ester intermediate is serine 182.

The protein belongs to the amidase family. GatA subfamily. Heterotrimer of A, B and C subunits.

It catalyses the reaction L-glutamyl-tRNA(Gln) + L-glutamine + ATP + H2O = L-glutaminyl-tRNA(Gln) + L-glutamate + ADP + phosphate + H(+). Functionally, allows the formation of correctly charged Gln-tRNA(Gln) through the transamidation of misacylated Glu-tRNA(Gln) in organisms which lack glutaminyl-tRNA synthetase. The reaction takes place in the presence of glutamine and ATP through an activated gamma-phospho-Glu-tRNA(Gln). The sequence is that of Glutamyl-tRNA(Gln) amidotransferase subunit A from Nitrobacter hamburgensis (strain DSM 10229 / NCIMB 13809 / X14).